Here is a 247-residue protein sequence, read N- to C-terminus: Chymase (247 aa).

The signal sequence occupies residues Met-1–Ala-17. A propeptide spans Lys-18–Glu-21 (activation peptide). The Peptidase S1 domain occupies Val-22–Lys-245. Cys-51 and Cys-67 are joined by a disulfide. The Charge relay system role is filled by His-66. The N-linked (GlcNAc...) asparagine glycan is linked to Asn-103. The active-site Charge relay system is the Asp-110. Asn-121 carries N-linked (GlcNAc...) asparagine glycosylation. Disulfide bonds link Cys-144–Cys-209 and Cys-175–Cys-188. Ser-203 (charge relay system) is an active-site residue.

The protein belongs to the peptidase S1 family. Granzyme subfamily.

Its subcellular location is the secreted. It is found in the cytoplasmic granule. The catalysed reaction is Preferential cleavage: Phe-|-Xaa &gt; Tyr-|-Xaa &gt; Trp-|-Xaa &gt; Leu-|-Xaa.. In terms of biological role, major secreted protease of mast cells with suspected roles in vasoactive peptide generation, extracellular matrix degradation, and regulation of gland secretion. The protein is Chymase of Cavia porcellus (Guinea pig).